Here is a 316-residue protein sequence, read N- to C-terminus: MANNEESRGLKSLFDWFANRRKAGATNPERQEREIADGLWHKCSKCGVLTYTKDLRANQMVCVECGHHNRVDSDERIRQLIDQNTWRPMDENLRATDPLQFRDRKAYSDRLREMEDKLGLLDAVKTGLGQINSSPVALAVMDFRFMGGSMGSVVGEKITRLIEQATQRRYPVVIICTSGGARMQEGMLSLMQMAKISAALERHRDARLLYIPVLTNPTTGGVTASFAMLGDIILAEPKATIGFAGRRVIEQTLREKLPDDFQTAEDLLKHGFVDDIVPRTQLKNTLSQLIALHQPVPTTPPMVLWETMSLSSTAAE.

Residues 39 to 308 enclose the CoA carboxyltransferase N-terminal domain; it reads LWHKCSKCGV…TPPMVLWETM (270 aa). Positions 43, 46, 62, and 65 each coordinate Zn(2+). The C4-type zinc finger occupies 43-65; it reads CSKCGVLTYTKDLRANQMVCVEC.

The protein belongs to the AccD/PCCB family. As to quaternary structure, acetyl-CoA carboxylase is a heterohexamer composed of biotin carboxyl carrier protein (AccB), biotin carboxylase (AccC) and two subunits each of ACCase subunit alpha (AccA) and ACCase subunit beta (AccD). Zn(2+) serves as cofactor.

It is found in the cytoplasm. The enzyme catalyses N(6)-carboxybiotinyl-L-lysyl-[protein] + acetyl-CoA = N(6)-biotinyl-L-lysyl-[protein] + malonyl-CoA. It participates in lipid metabolism; malonyl-CoA biosynthesis; malonyl-CoA from acetyl-CoA: step 1/1. Component of the acetyl coenzyme A carboxylase (ACC) complex. Biotin carboxylase (BC) catalyzes the carboxylation of biotin on its carrier protein (BCCP) and then the CO(2) group is transferred by the transcarboxylase to acetyl-CoA to form malonyl-CoA. The protein is Acetyl-coenzyme A carboxylase carboxyl transferase subunit beta of Trichormus variabilis (strain ATCC 29413 / PCC 7937) (Anabaena variabilis).